A 64-amino-acid chain; its full sequence is DNA-directed RNA polymerase subunit Rpo10 (64 aa).

Cys7, Cys10, Cys45, and Cys46 together coordinate Zn(2+).

This sequence belongs to the archaeal Rpo10/eukaryotic RPB10 RNA polymerase subunit family. Part of the RNA polymerase complex. Zn(2+) is required as a cofactor.

It localises to the cytoplasm. The catalysed reaction is RNA(n) + a ribonucleoside 5'-triphosphate = RNA(n+1) + diphosphate. Functionally, DNA-dependent RNA polymerase (RNAP) catalyzes the transcription of DNA into RNA using the four ribonucleoside triphosphates as substrates. This Halorubrum lacusprofundi (strain ATCC 49239 / DSM 5036 / JCM 8891 / ACAM 34) protein is DNA-directed RNA polymerase subunit Rpo10.